The primary structure comprises 264 residues: S-adenosylmethionine decarboxylase proenzyme (264 aa).

Residue S113 is the Schiff-base intermediate with substrate; via pyruvic acid of the active site. Residue S113 is modified to Pyruvic acid (Ser); by autocatalysis. The Proton acceptor; for processing activity role is filled by H118. C141 (proton donor; for catalytic activity) is an active-site residue.

The protein belongs to the prokaryotic AdoMetDC family. Type 2 subfamily. In terms of assembly, heterooctamer of four alpha and four beta chains arranged as a tetramer of alpha/beta heterodimers. Pyruvate is required as a cofactor. Is synthesized initially as an inactive proenzyme. Formation of the active enzyme involves a self-maturation process in which the active site pyruvoyl group is generated from an internal serine residue via an autocatalytic post-translational modification. Two non-identical subunits are generated from the proenzyme in this reaction, and the pyruvate is formed at the N-terminus of the alpha chain, which is derived from the carboxyl end of the proenzyme. The post-translation cleavage follows an unusual pathway, termed non-hydrolytic serinolysis, in which the side chain hydroxyl group of the serine supplies its oxygen atom to form the C-terminus of the beta chain, while the remainder of the serine residue undergoes an oxidative deamination to produce ammonia and the pyruvoyl group blocking the N-terminus of the alpha chain.

It catalyses the reaction S-adenosyl-L-methionine + H(+) = S-adenosyl 3-(methylsulfanyl)propylamine + CO2. It participates in amine and polyamine biosynthesis; S-adenosylmethioninamine biosynthesis; S-adenosylmethioninamine from S-adenosyl-L-methionine: step 1/1. Its function is as follows. Catalyzes the decarboxylation of S-adenosylmethionine to S-adenosylmethioninamine (dcAdoMet), the propylamine donor required for the synthesis of the polyamines spermine and spermidine from the diamine putrescine. This chain is S-adenosylmethionine decarboxylase proenzyme, found in Xylella fastidiosa (strain 9a5c).